A 132-amino-acid polypeptide reads, in one-letter code: L-ectoine synthase (132 aa).

The protein belongs to the ectoine synthase family.

The catalysed reaction is (2S)-4-acetamido-2-aminobutanoate = L-ectoine + H2O. The protein operates within amine and polyamine biosynthesis; ectoine biosynthesis; L-ectoine from L-aspartate 4-semialdehyde: step 3/3. Functionally, catalyzes the circularization of gamma-N-acetyl-alpha,gamma-diaminobutyric acid (ADABA) to ectoine (1,4,5,6-tetrahydro-2-methyl-4-pyrimidine carboxylic acid), which is an excellent osmoprotectant. This chain is L-ectoine synthase (ectC), found in Streptomyces anulatus (Streptomyces chrysomallus).